The chain runs to 579 residues: uncharacterized protein (579 aa).

3 helical membrane-spanning segments follow: residues 173–193, 196–216, and 218–238; these read IAMG…GGLA, FVAA…MIGA, and YLGT…GFGA.

Belongs to the TMCO4 family.

Its subcellular location is the cytoplasm. The protein resides in the nucleus membrane. This is an uncharacterized protein from Schizosaccharomyces pombe (strain 972 / ATCC 24843) (Fission yeast).